Reading from the N-terminus, the 223-residue chain is Cytidylate kinase (223 aa).

12–20 (GPAGSGKST) lines the ATP pocket.

This sequence belongs to the cytidylate kinase family. Type 1 subfamily.

The protein resides in the cytoplasm. The catalysed reaction is CMP + ATP = CDP + ADP. It carries out the reaction dCMP + ATP = dCDP + ADP. The sequence is that of Cytidylate kinase from Aster yellows witches'-broom phytoplasma (strain AYWB).